The following is a 339-amino-acid chain: tRNA N6-adenosine threonylcarbamoyltransferase (339 aa).

Positions 117 and 121 each coordinate Fe cation. Substrate-binding positions include 140 to 144 (VVSGG), aspartate 173, glycine 186, and asparagine 279. A Fe cation-binding site is contributed by aspartate 307.

The protein belongs to the KAE1 / TsaD family. Fe(2+) serves as cofactor.

It is found in the cytoplasm. It carries out the reaction L-threonylcarbamoyladenylate + adenosine(37) in tRNA = N(6)-L-threonylcarbamoyladenosine(37) in tRNA + AMP + H(+). In terms of biological role, required for the formation of a threonylcarbamoyl group on adenosine at position 37 (t(6)A37) in tRNAs that read codons beginning with adenine. Is involved in the transfer of the threonylcarbamoyl moiety of threonylcarbamoyl-AMP (TC-AMP) to the N6 group of A37, together with TsaE and TsaB. TsaD likely plays a direct catalytic role in this reaction. This Syntrophomonas wolfei subsp. wolfei (strain DSM 2245B / Goettingen) protein is tRNA N6-adenosine threonylcarbamoyltransferase.